A 521-amino-acid chain; its full sequence is Bifunctional purine biosynthesis protein PurH (521 aa).

An MGS-like domain is found at 1 to 145 (MIKQALISVS…KNHRDVTVVV (145 aa)).

This sequence belongs to the PurH family.

The catalysed reaction is (6R)-10-formyltetrahydrofolate + 5-amino-1-(5-phospho-beta-D-ribosyl)imidazole-4-carboxamide = 5-formamido-1-(5-phospho-D-ribosyl)imidazole-4-carboxamide + (6S)-5,6,7,8-tetrahydrofolate. The enzyme catalyses IMP + H2O = 5-formamido-1-(5-phospho-D-ribosyl)imidazole-4-carboxamide. It functions in the pathway purine metabolism; IMP biosynthesis via de novo pathway; 5-formamido-1-(5-phospho-D-ribosyl)imidazole-4-carboxamide from 5-amino-1-(5-phospho-D-ribosyl)imidazole-4-carboxamide (10-formyl THF route): step 1/1. It participates in purine metabolism; IMP biosynthesis via de novo pathway; IMP from 5-formamido-1-(5-phospho-D-ribosyl)imidazole-4-carboxamide: step 1/1. The protein is Bifunctional purine biosynthesis protein PurH of Paraburkholderia xenovorans (strain LB400).